The following is a 141-amino-acid chain: ATP synthase epsilon chain (141 aa).

Belongs to the ATPase epsilon chain family. F-type ATPases have 2 components, CF(1) - the catalytic core - and CF(0) - the membrane proton channel. CF(1) has five subunits: alpha(3), beta(3), gamma(1), delta(1), epsilon(1). CF(0) has three main subunits: a, b and c.

The protein resides in the cell inner membrane. Produces ATP from ADP in the presence of a proton gradient across the membrane. The polypeptide is ATP synthase epsilon chain (Teredinibacter turnerae (strain ATCC 39867 / T7901)).